We begin with the raw amino-acid sequence, 367 residues long: Alanine racemase (367 aa).

Lys-40 functions as the Proton acceptor; specific for D-alanine in the catalytic mechanism. Lys-40 is modified (N6-(pyridoxal phosphate)lysine). A substrate-binding site is contributed by Arg-136. The Proton acceptor; specific for L-alanine role is filled by Tyr-263. Residue Met-310 coordinates substrate.

Belongs to the alanine racemase family. Requires pyridoxal 5'-phosphate as cofactor.

The catalysed reaction is L-alanine = D-alanine. It participates in amino-acid biosynthesis; D-alanine biosynthesis; D-alanine from L-alanine: step 1/1. In terms of biological role, catalyzes the interconversion of L-alanine and D-alanine. May also act on other amino acids. The sequence is that of Alanine racemase (alr) from Streptococcus thermophilus (strain ATCC BAA-250 / LMG 18311).